Reading from the N-terminus, the 218-residue chain is Eukaryotic translation initiation factor 3 subunit K (218 aa).

The PCI domain maps to 44-205; it reads YDWGANLAVL…NIKTKNITEK (162 aa).

Belongs to the eIF-3 subunit K family. In terms of assembly, component of the eukaryotic translation initiation factor 3 (eIF-3) complex.

The protein resides in the cytoplasm. Functionally, component of the eukaryotic translation initiation factor 3 (eIF-3) complex, which is involved in protein synthesis of a specialized repertoire of mRNAs and, together with other initiation factors, stimulates binding of mRNA and methionyl-tRNAi to the 40S ribosome. The eIF-3 complex specifically targets and initiates translation of a subset of mRNAs involved in cell proliferation. In Bombyx mori (Silk moth), this protein is Eukaryotic translation initiation factor 3 subunit K.